A 250-amino-acid chain; its full sequence is Hydroxyacylglutathione hydrolase (250 aa).

Zn(2+) is bound by residues histidine 53, histidine 55, aspartate 57, histidine 58, histidine 111, aspartate 128, and histidine 166.

This sequence belongs to the metallo-beta-lactamase superfamily. Glyoxalase II family. Monomer. Zn(2+) serves as cofactor.

The catalysed reaction is an S-(2-hydroxyacyl)glutathione + H2O = a 2-hydroxy carboxylate + glutathione + H(+). It participates in secondary metabolite metabolism; methylglyoxal degradation; (R)-lactate from methylglyoxal: step 2/2. Its function is as follows. Thiolesterase that catalyzes the hydrolysis of S-D-lactoyl-glutathione to form glutathione and D-lactic acid. This chain is Hydroxyacylglutathione hydrolase, found in Methylobacillus flagellatus (strain ATCC 51484 / DSM 6875 / VKM B-1610 / KT).